An 807-amino-acid chain; its full sequence is Glycerol-3-phosphate acyltransferase (807 aa).

Positions 305-310 (CHRSHM) match the HXXXXD motif motif.

The protein belongs to the GPAT/DAPAT family.

It is found in the cell inner membrane. The enzyme catalyses sn-glycerol 3-phosphate + an acyl-CoA = a 1-acyl-sn-glycero-3-phosphate + CoA. Its pathway is phospholipid metabolism; CDP-diacylglycerol biosynthesis; CDP-diacylglycerol from sn-glycerol 3-phosphate: step 1/3. The chain is Glycerol-3-phosphate acyltransferase from Escherichia coli O139:H28 (strain E24377A / ETEC).